The sequence spans 216 residues: Ribose-5-phosphate isomerase A (216 aa).

Residues 26–29, 79–82, and 92–95 each bind substrate; these read TGST, DGAD, and KGGG. Catalysis depends on E101, which acts as the Proton acceptor. K119 contributes to the substrate binding site.

The protein belongs to the ribose 5-phosphate isomerase family. Homodimer.

The catalysed reaction is aldehydo-D-ribose 5-phosphate = D-ribulose 5-phosphate. It participates in carbohydrate degradation; pentose phosphate pathway; D-ribose 5-phosphate from D-ribulose 5-phosphate (non-oxidative stage): step 1/1. In terms of biological role, catalyzes the reversible conversion of ribose-5-phosphate to ribulose 5-phosphate. The protein is Ribose-5-phosphate isomerase A of Legionella pneumophila subsp. pneumophila (strain Philadelphia 1 / ATCC 33152 / DSM 7513).